The chain runs to 195 residues: uncharacterized protein (195 aa).

Disordered stretches follow at residues 1 to 54 (MPKG…SNKI) and 173 to 195 (LAGAARGPSQTGTPVAEEAKPIS). Residues 7–20 (KPNEKKEELEKFAK) are compositionally biased toward basic and acidic residues. Residues 45 to 54 (QNDSSSSNKI) show a composition bias toward polar residues. Residues 48-97 (SSSSNKIVLSQAEKDLLRTELDKTEEEISTLKQVLSARQKHAAELKRKLG) adopt a coiled-coil conformation.

It belongs to the TPD52 family.

This is an uncharacterized protein from Caenorhabditis elegans.